The primary structure comprises 163 residues: Lipoprotein signal peptidase (163 aa).

4 consecutive transmembrane segments (helical) span residues 9-29 (YLAIAIIVLLLDQLSKWSALS), 39-59 (VLPFMNWLLLFNPGTAFSFLA), 67-87 (WFFTVLGLAASIYIIWMLYKS), and 92-112 (LLCIALSLILGGALGNVLDRV). Active-site residues include Asp-119 and Asp-137. The chain crosses the membrane as a helical span at residues 130-150 (WPAFNIADSAICVGAALIIWG).

It belongs to the peptidase A8 family.

It is found in the cell inner membrane. It carries out the reaction Release of signal peptides from bacterial membrane prolipoproteins. Hydrolyzes -Xaa-Yaa-Zaa-|-(S,diacylglyceryl)Cys-, in which Xaa is hydrophobic (preferably Leu), and Yaa (Ala or Ser) and Zaa (Gly or Ala) have small, neutral side chains.. Its pathway is protein modification; lipoprotein biosynthesis (signal peptide cleavage). Functionally, this protein specifically catalyzes the removal of signal peptides from prolipoproteins. The polypeptide is Lipoprotein signal peptidase (Polynucleobacter necessarius subsp. necessarius (strain STIR1)).